Reading from the N-terminus, the 433-residue chain is tRNA-2-methylthio-N(6)-dimethylallyladenosine synthase (433 aa).

In terms of domain architecture, MTTase N-terminal spans 3 to 118 (KKLFIQTLGC…ISTAVKTPKF (116 aa)). [4Fe-4S] cluster is bound by residues C12, C49, C81, C150, C154, and C157. The 234-residue stretch at 136–369 (RGSPYKSHIN…QSRHNEILDE (234 aa)) folds into the Radical SAM core domain. A TRAM domain is found at 372–433 (AAQEGKILDV…RMVLYGELAN (62 aa)).

The protein belongs to the methylthiotransferase family. MiaB subfamily. In terms of assembly, monomer. Requires [4Fe-4S] cluster as cofactor.

It localises to the cytoplasm. It catalyses the reaction N(6)-dimethylallyladenosine(37) in tRNA + (sulfur carrier)-SH + AH2 + 2 S-adenosyl-L-methionine = 2-methylsulfanyl-N(6)-dimethylallyladenosine(37) in tRNA + (sulfur carrier)-H + 5'-deoxyadenosine + L-methionine + A + S-adenosyl-L-homocysteine + 2 H(+). Catalyzes the methylthiolation of N6-(dimethylallyl)adenosine (i(6)A), leading to the formation of 2-methylthio-N6-(dimethylallyl)adenosine (ms(2)i(6)A) at position 37 in tRNAs that read codons beginning with uridine. The sequence is that of tRNA-2-methylthio-N(6)-dimethylallyladenosine synthase from Campylobacter curvus (strain 525.92).